Consider the following 461-residue polypeptide: Transforming growth factor beta-1-induced transcript 1 protein (461 aa).

Residue M1 is modified to N-acetylmethionine. The tract at residues 1–87 (MEDLDALLSD…PFSSSSGVLG (87 aa)) is disordered. The transcription activation stretch occupies residues 1-200 (MEDLDALLSD…GSPSPPEPTG (200 aa)). Residues 1 to 240 (MEDLDALLSD…CNKPIAGQVV (240 aa)) are interaction with PTK2B/PYK2. Positions 3-15 (DLDALLSDLETTT) match the LD motif 1 motif. Position 33 is a phosphothreonine (T33). At Y38 the chain carries Phosphotyrosine. The span at 40–52 (HQPQTGSGESSGA) shows a compositional bias: polar residues. Y60 carries the post-translational modification Phosphotyrosine; by FAK2 and FYN. S68 is modified (phosphoserine). Residues 83–136 (SGVLGTGLCELDRLLQELNATQFNITDEIMSQFPSSKVASGEQKEDQSEDKKRP) form an interaction with PTK2/FAK1 region. The LD motif 2 signature appears at 92 to 104 (ELDRLLQELNATQ). A disordered region spans residues 116-152 (PSSKVASGEQKEDQSEDKKRPSLPSSPSPGLPKASAT). The span at 124–135 (EQKEDQSEDKKR) shows a compositional bias: basic and acidic residues. Phosphoserine is present on residues S137, S140, S141, S143, S164, and S186. The LD motif 3 motif lies at 157–168 (ELDRLMASLSDF). The segment at 172–205 (NHLPASGPTQPPVVSSTNEGSPSPPEPTGKGSLD) is disordered. Over residues 183–192 (PVVSSTNEGS) the composition is skewed to polar residues. T188 carries the phosphothreonine modification. A phosphoserine mark is found at S192 and S194. Positions 203–215 (SLDTMLGLLQSDL) match the LD motif 4 motif. LIM zinc-binding domains are found at residues 226–285 (GLCG…RFSP), 286–343 (RCGF…QLFA), 344–403 (PRCQ…RRGS), and 404–461 (LCAT…KLFG). Residue S403 is modified to Phosphoserine. Phosphothreonine is present on T407.

The protein belongs to the paxillin family. As to quaternary structure, homooligomer. Interacts with PPARG. Interacts with TRAF4. Interacts with CRIP2. Interacts with HSPB1. Interacts with ILK. Interacts with LIMS1 and LIMS2. Interacts with NCK2. Interacts with NUDT16L1. Interacts with PAK. Interacts with PTPN12. Interacts with TCF3. Interacts with TCF7L2. Interacts with VCL. Interacts (via LD motif 3) with GIT1. Also interacts with GIT2. Forms a complex with ARHGEF7. Interacts with AR/androgen receptor in a ligand-dependent manner. Interacts with CSK. Interacts with PTK2/FAK1 and PTK2B/PYK2. Interacts with SLC6A3 and SLC6A4. Interacts with NR3C1. Interacts with SMAD3. Interacts with MAPK15. Interacts with SRC. Interacts with LYN. Interacts with talin. Interacts (via LIM zinc-binding domain 2) with CBLC (via RING-type zinc finger); the interaction is direct and enhances CBLC E3 ubiquitin-protein ligase activity. Interacts with PARVA. Interacts with PXN. Phosphorylated by gonadotropin-releasing hormone-activated SRC. In terms of tissue distribution, expressed in platelets, smooth muscle and prostate stromal cells (at protein level).

The protein localises to the cell junction. Its subcellular location is the focal adhesion. It localises to the nucleus matrix. It is found in the cytoplasm. The protein resides in the cytoskeleton. Its function is as follows. Functions as a molecular adapter coordinating multiple protein-protein interactions at the focal adhesion complex and in the nucleus. Links various intracellular signaling modules to plasma membrane receptors and regulates the Wnt and TGFB signaling pathways. May also regulate SLC6A3 and SLC6A4 targeting to the plasma membrane hence regulating their activity. In the nucleus, functions as a nuclear receptor coactivator regulating glucocorticoid, androgen, mineralocorticoid and progesterone receptor transcriptional activity. May play a role in the processes of cell growth, proliferation, migration, differentiation and senescence. May have a zinc-dependent DNA-binding activity. This chain is Transforming growth factor beta-1-induced transcript 1 protein (TGFB1I1), found in Homo sapiens (Human).